The chain runs to 201 residues: NADH-ubiquinone oxidoreductase chain 6 (201 aa).

Helical transmembrane passes span 4–24 (LVLFYFFSGLSLVSASIVISV), 28–48 (VFSVVFLILVFFNVVGLLLLL), 55–75 (LLFLIVYVGAIAVLFLFVVMI), 88–108 (FYYAFFGSLIMAIFLFEIFII), and 151–171 (LFILSGFVLLVAILGAIILTL).

This sequence belongs to the complex I subunit 6 family.

It is found in the mitochondrion membrane. It carries out the reaction a ubiquinone + NADH + 5 H(+)(in) = a ubiquinol + NAD(+) + 4 H(+)(out). In terms of biological role, core subunit of the mitochondrial membrane respiratory chain NADH dehydrogenase (Complex I) that is believed to belong to the minimal assembly required for catalysis. Complex I functions in the transfer of electrons from NADH to the respiratory chain. The immediate electron acceptor for the enzyme is believed to be ubiquinone. This Cyanidium caldarium (Red alga) protein is NADH-ubiquinone oxidoreductase chain 6 (ND6).